The following is a 186-amino-acid chain: ATP synthase subunit delta (186 aa).

This sequence belongs to the ATPase delta chain family. In terms of assembly, F-type ATPases have 2 components, F(1) - the catalytic core - and F(0) - the membrane proton channel. F(1) has five subunits: alpha(3), beta(3), gamma(1), delta(1), epsilon(1). F(0) has three main subunits: a(1), b(2) and c(10-14). The alpha and beta chains form an alternating ring which encloses part of the gamma chain. F(1) is attached to F(0) by a central stalk formed by the gamma and epsilon chains, while a peripheral stalk is formed by the delta and b chains.

The protein localises to the cell inner membrane. F(1)F(0) ATP synthase produces ATP from ADP in the presence of a proton or sodium gradient. F-type ATPases consist of two structural domains, F(1) containing the extramembraneous catalytic core and F(0) containing the membrane proton channel, linked together by a central stalk and a peripheral stalk. During catalysis, ATP synthesis in the catalytic domain of F(1) is coupled via a rotary mechanism of the central stalk subunits to proton translocation. In terms of biological role, this protein is part of the stalk that links CF(0) to CF(1). It either transmits conformational changes from CF(0) to CF(1) or is implicated in proton conduction. The polypeptide is ATP synthase subunit delta (Bradyrhizobium diazoefficiens (strain JCM 10833 / BCRC 13528 / IAM 13628 / NBRC 14792 / USDA 110)).